The following is a 747-amino-acid chain: Probable copper-transporting ATPase PacS (747 aa).

At 1–101 (MVNQQTLTLR…RQLAQRVWVS (101 aa)) the chain is on the cytoplasmic side. Positions 3–69 (NQQTLTLRGM…AIEAAGYHAF (67 aa)) constitute an HMA domain. A metal cation-binding residues include cysteine 14 and cysteine 17. Residues 102 to 122 (GLIASLLVIGSLPMMLGISIP) traverse the membrane as a helical segment. Over 123 to 132 (GIPMWLHHPG) the chain is Extracellular. A helical transmembrane segment spans residues 133–151 (LQLGLTLPVLWAGRSFFIN). Residues 152-158 (AWKAFRQ) lie on the Cytoplasmic side of the membrane. A helical transmembrane segment spans residues 159-179 (NTATMDTLVAVGTGAAFLYSL). The Extracellular segment spans residues 180 to 199 (AVTLFPQWLTRQGLPPDVYY). Residues 200–220 (EAIAVIIALLLLGRSLEERAK) traverse the membrane as a helical segment. Residues 221–348 (GQTSAAIRQL…KAPIQRLADQ (128 aa)) are Cytoplasmic-facing. Residues 349–371 (VTGWFVPAVIAIAILTFVLWFNW) form a helical membrane-spanning segment. Topologically, residues 372–378 (IGNVTLA) are extracellular. Residues 379–396 (LITAVGVLIIACPCALGL) traverse the membrane as a helical segment. The Cytoplasmic portion of the chain corresponds to 397–688 (ATPTSIMVGT…QLSRATMTNI (292 aa)). The 4-aspartylphosphate intermediate role is filled by aspartate 434. Residues aspartate 634 and aspartate 638 each coordinate Mg(2+). A helical membrane pass occupies residues 689–708 (RQNLFFAFIYNVAGIPIAAG). The Extracellular portion of the chain corresponds to 709–720 (ILYPLLGWLLSP). The chain crosses the membrane as a helical span at residues 721 to 739 (MLAGAAMAFSSVSVVTNAL). Residues 740 to 747 (RLRQFQPR) lie on the Cytoplasmic side of the membrane.

Belongs to the cation transport ATPase (P-type) (TC 3.A.3) family. Type IB subfamily.

Its subcellular location is the cell membrane. The enzyme catalyses Cu(+)(in) + ATP + H2O = Cu(+)(out) + ADP + phosphate + H(+). Functionally, may play a role in the osmotic adaptation. The protein is Probable copper-transporting ATPase PacS (pacS) of Synechococcus elongatus (strain ATCC 33912 / PCC 7942 / FACHB-805) (Anacystis nidulans R2).